A 388-amino-acid polypeptide reads, in one-letter code: Succinate--CoA ligase [ADP-forming] subunit beta (388 aa).

The ATP-grasp domain occupies 9–244 (KQLFREYGLP…TTQDDEREMH (236 aa)). Residues K46, 53 to 55 (GRG), E99, S102, and E107 each bind ATP. Mg(2+) contacts are provided by N199 and D213. Residues N264 and 321 to 323 (GIV) each bind substrate.

This sequence belongs to the succinate/malate CoA ligase beta subunit family. Heterotetramer of two alpha and two beta subunits. The cofactor is Mg(2+).

The catalysed reaction is succinate + ATP + CoA = succinyl-CoA + ADP + phosphate. It carries out the reaction GTP + succinate + CoA = succinyl-CoA + GDP + phosphate. Its pathway is carbohydrate metabolism; tricarboxylic acid cycle; succinate from succinyl-CoA (ligase route): step 1/1. In terms of biological role, succinyl-CoA synthetase functions in the citric acid cycle (TCA), coupling the hydrolysis of succinyl-CoA to the synthesis of either ATP or GTP and thus represents the only step of substrate-level phosphorylation in the TCA. The beta subunit provides nucleotide specificity of the enzyme and binds the substrate succinate, while the binding sites for coenzyme A and phosphate are found in the alpha subunit. In Psychromonas ingrahamii (strain DSM 17664 / CCUG 51855 / 37), this protein is Succinate--CoA ligase [ADP-forming] subunit beta.